An 835-amino-acid polypeptide reads, in one-letter code: Transcription intermediary factor 1-beta (835 aa).

Over residues Ala-14–Ser-24 the composition is skewed to low complexity. The segment at Ala-14 to Gly-57 is disordered. A phosphoserine mark is found at Ser-24, Ser-27, and Ser-31. Lys-36 is covalently cross-linked (Glycyl lysine isopeptide (Lys-Gly) (interchain with G-Cter in SUMO2)). The span at Ala-39–Pro-53 shows a compositional bias: low complexity. Phosphoserine is present on Ser-52. The RING-type zinc-finger motif lies at Cys-67–Lys-123. Lys-129 is covalently cross-linked (Glycyl lysine isopeptide (Lys-Gly) (interchain with G-Cter in SUMO2)). Ser-140 bears the Phosphoserine mark. The segment at Asp-150–Thr-197 adopts a B box-type 1; atypical zinc-finger fold. Zn(2+)-binding residues include Cys-155, Cys-158, Cys-179, and His-183. Lys-201 is covalently cross-linked (Glycyl lysine isopeptide (Lys-Gly) (interchain with G-Cter in SUMO2)). The B box-type 2 zinc finger occupies Glu-206 to Leu-247. Residues Cys-211, His-214, Cys-234, and His-239 each coordinate Zn(2+). The interval Glu-248–Leu-378 is leucine zipper alpha helical coiled-coil region. An interaction with MAGEC2 region spans residues Asp-249–Leu-378. Residues Lys-256 and Lys-263 each participate in a glycyl lysine isopeptide (Lys-Gly) (interchain with G-Cter in SUMO2) cross-link. Lys-268 carries the N6-acetyllysine modification. Lys-274 participates in a covalent cross-link: Glycyl lysine isopeptide (Lys-Gly) (interchain with G-Cter in SUMO2). An N6-acetyllysine; alternate modification is found at Lys-306. Lys-306 participates in a covalent cross-link: Glycyl lysine isopeptide (Lys-Gly) (interchain with G-Cter in SUMO2); alternate. Residue Lys-321 forms a Glycyl lysine isopeptide (Lys-Gly) (interchain with G-Cter in SUMO2) linkage. Lys-342 carries the N6-acetyllysine modification. Lys-368 is covalently cross-linked (Glycyl lysine isopeptide (Lys-Gly) (interchain with G-Cter in SUMO2)). The tract at residues Lys-368–Phe-372 is involved in binding PPP1CA. N6-acetyllysine; alternate is present on Lys-379. Lys-379 participates in a covalent cross-link: Glycyl lysine isopeptide (Lys-Gly) (interchain with G-Cter in SUMO2); alternate. Lys-379 is covalently cross-linked (Glycyl lysine isopeptide (Lys-Gly) (interchain with G-Cter in SUMO1); alternate). A Glycyl lysine isopeptide (Lys-Gly) (interchain with G-Cter in SUMO2) cross-link involves residue Lys-409. Residues Glu-413–Gly-481 form a disordered region. The residue at position 419 (Ser-419) is a Phosphoserine. Lys-436 is covalently cross-linked (Glycyl lysine isopeptide (Lys-Gly) (interchain with G-Cter in SUMO2)). Residues Lys-436–Met-445 are compositionally biased toward polar residues. 2 positions are modified to phosphoserine: Ser-439 and Ser-441. Residue Lys-470 forms a Glycyl lysine isopeptide (Lys-Gly) (interchain with G-Cter in SUMO2); alternate linkage. Lys-470 participates in a covalent cross-link: Glycyl lysine isopeptide (Lys-Gly) (interchain with G-Cter in SUMO1); alternate. A Citrulline modification is found at Arg-471. Position 472 is a phosphoserine (Ser-472). The residue at position 473 (Arg-473) is a Citrulline. Phosphoserine is present on residues Ser-474, Ser-480, and Ser-490. Residues Gly-477 to Thr-514 are HP1 box. The PxVxL motif motif lies at Leu-482 to Asp-495. Residue Thr-499 is modified to Phosphothreonine. Ser-502 carries the phosphoserine modification. A Glycyl lysine isopeptide (Lys-Gly) (interchain with G-Cter in SUMO2) cross-link involves residue Lys-508. Lys-555 is covalently cross-linked (Glycyl lysine isopeptide (Lys-Gly) (interchain with G-Cter in SUMO2); alternate). Lys-555 participates in a covalent cross-link: Glycyl lysine isopeptide (Lys-Gly) (interchain with G-Cter in SUMO); alternate. Lys-576 participates in a covalent cross-link: Glycyl lysine isopeptide (Lys-Gly) (interchain with G-Cter in SUMO2). Ser-595 carries the post-translational modification Phosphoserine. Residues Ala-626–Leu-673 form a PHD-type zinc finger. Lys-677 is covalently cross-linked (Glycyl lysine isopeptide (Lys-Gly) (interchain with G-Cter in SUMO)). 3 positions are modified to phosphoserine: Ser-684, Ser-690, and Ser-698. The Bromo domain occupies Lys-696 to Ala-800. A Glycyl lysine isopeptide (Lys-Gly) (interchain with G-Cter in SUMO2); alternate cross-link involves residue Lys-751. Lys-751 participates in a covalent cross-link: Glycyl lysine isopeptide (Lys-Gly) (interchain with G-Cter in SUMO1); alternate. Lys-751 participates in a covalent cross-link: Glycyl lysine isopeptide (Lys-Gly) (interchain with G-Cter in SUMO); alternate. Position 753 is a phosphoserine (Ser-753). Tyr-756 bears the Phosphotyrosine mark. Ser-758 carries the post-translational modification Phosphoserine. 3 positions are modified to N6-acetyllysine; alternate: Lys-771, Lys-775, and Lys-780. Residues Lys-771, Lys-775, and Lys-780 each participate in a glycyl lysine isopeptide (Lys-Gly) (interchain with G-Cter in SUMO2); alternate cross-link. Lys-780 is covalently cross-linked (Glycyl lysine isopeptide (Lys-Gly) (interchain with G-Cter in SUMO1); alternate). At Ser-785 the chain carries Phosphoserine. A Glycyl lysine isopeptide (Lys-Gly) (interchain with G-Cter in SUMO2) cross-link involves residue Lys-805. Ser-825 carries the phosphoserine; by ATM and ATR and dsDNA kinase modification.

Belongs to the TRIM/RBCC family. In terms of assembly, interacts with ZNF382. Interacts with SETX. Oligomer; the RBCC domain homotrimerizes and interacts with one molecule of KRAB to form the KRAB-KAP1 corepressor complex. Binding to a KRAB domain is an absolute requirement for silencing gene expression. Interacts with CEBPB and NR3C1. Interacts with a number of KRAB-ZFP proteins including ZNF10, ZFP53, ZFP68 and ZNF256. Interacts with NCOR1, NR3C1 and CHD3. Interacts with CEBPB (via the RING-type and PHD-type zinc fingers). Component of a ternary complex that includes TRIM28, a HP1 protein (CBX1, CBX3 OR CBX5), a KRAB domain-containing protein, and DNA. Interacts with CBX5 (via the PxVxL motif); the interaction occurs in interphase nuclei and competes for binding POGZ. Interacts with POGZ; the interaction competes for interaction with CBX5. Interacts with SETDB1; the interaction is enhanced by KAP1 sumoylation, stimulates SETDB1 histone methyltransferase activity and gene silencing. Interacts (via the PHD-type zinc finger) with UBE2I; the interaction is required for sumoylation and repressor activity. Component of the TRIM28/KAP1-ERBB4-MDM2 complex involved in connecting growth factor and DNA damage responses. Interacts directly with ERBB4; the interaction represses ERBB4-mediated transcription activity. Interacts with MDM2; the interaction contributes to p53/TP53 inactivation. Component of the TRIM28/KAP1-MDM2-p53/TP53; involved in regulating p53/TP53 stabilization and activity. Interacts (via the leucine zipper alpha helical coiled-coil) with E2F1 (central region); the interaction inhibits E2F1 acetylation and transcriptional activity. Interacts with PPP1CA; the interaction dephosphorylates TRIM28 at Ser-824 and forms a complex at the p21 promoter site. Interacts with PPP1CB; the interaction is weak but is increased on dephosphorylation at Ser-824. Interacts with SMARCAD1. Interacts with, and sumoylates IRF7. Interacts with MAGEC2. Part of a complex composed of TRIM28, HDAC1, HDAC2 and EHMT2. Interacts with AICDA. The large PER complex involved in the histone methylation is composed of at least PER2, CBX3, TRIM28, SUV39H1 and/or SUV39H2; CBX3 mediates the formation of the complex. Interacts with NR4A3; the interactions potentiates NR4A3 activity on NurRE promoter. Interacts (unphosphorylated or phosphorylated form) with ZBTB1 (via BTB domain). Probably part of a corepressor complex containing ZNF304, TRIM28, SETDB1 and DNMT1. Interacts with ATRX. Forms a complex with ATRX, SETDB1 and ZNF274. Interacts with ZFP568; the interaction mediates ZFP568 transcriptional repression activity. Interacts with RRP1B. Interacts with CRY1. Interacts with ZNF263; recruited to the SIX3 promoter along with other proteins involved in chromatin modification and transcriptional corepression where it contributes to transcriptional repression. Interacts with CYREN (via XLF motif). Interacts with TRIM17; this interaction prevents TRIM28 activity. Interacts with ZNF746. Interacts with PHF13. Interacts with ZNF354C. Interacts with ZNF432; the interaction is independent of PARP1. In terms of processing, ATM-induced phosphorylation on Ser-825 represses sumoylation leading to the de-repression of expression of a subset of genes involved in cell cycle control and apoptosis in response to genotoxic stress. Dephosphorylation by the phosphatases, PPP1CA and PP1CB forms, allows sumoylation and expression of TRIM28 target genes. Post-translationally, sumoylation/desumoylation events regulate TRIM28-mediated transcriptional repression. Sumoylation is required for interaction with CHD3 and SETDB1 and the corepressor activity. Represses and is repressed by Ser-824 phosphorylation. Enhances the TRIM28 corepressor activity, inhibiting transcriptional activity of a number of genes including GADD45A and CDKN1A/p21. Lys-555, Lys-780 and Lys-805 are the major sites of sumoylation. In response to Dox-induced DNA damage, enhanced phosphorylation on Ser-825 prevents sumoylation and allows de-repression of CDKN1A/p21. Auto-ubiquitinated; enhanced by MAGEA2 and MAGEC2. In terms of processing, citrullinated by PADI4. Post-translationally, ADP-ribosylated by SIRT6, promoting TRIM28/KAP1 interaction with CBX5, thereby contributing to the packaging of LINE-1 retrotransposon elements into transcriptionally repressive heterochromatin.

It is found in the nucleus. The enzyme catalyses S-ubiquitinyl-[E2 ubiquitin-conjugating enzyme]-L-cysteine + [acceptor protein]-L-lysine = [E2 ubiquitin-conjugating enzyme]-L-cysteine + N(6)-ubiquitinyl-[acceptor protein]-L-lysine.. The protein operates within protein modification; protein sumoylation. Functionally, nuclear corepressor for KRAB domain-containing zinc finger proteins (KRAB-ZFPs). Mediates gene silencing by recruiting CHD3, a subunit of the nucleosome remodeling and deacetylation (NuRD) complex, and SETDB1 (which specifically methylates histone H3 at 'Lys-9' (H3K9me)) to the promoter regions of KRAB target genes. Enhances transcriptional repression by coordinating the increase in H3K9me, the decrease in histone H3 'Lys-9 and 'Lys-14' acetylation (H3K9ac and H3K14ac, respectively) and the disposition of HP1 proteins to silence gene expression. Recruitment of SETDB1 induces heterochromatinization. May play a role as a coactivator for CEBPB and NR3C1 in the transcriptional activation of ORM1. Also a corepressor for ERBB4. Inhibits E2F1 activity by stimulating E2F1-HDAC1 complex formation and inhibiting E2F1 acetylation. May serve as a partial backup to prevent E2F1-mediated apoptosis in the absence of RB1. Important regulator of CDKN1A/p21(CIP1). Has E3 SUMO-protein ligase activity toward itself via its PHD-type zinc finger. Also specifically sumoylates IRF7, thereby inhibiting its transactivation activity. Ubiquitinates p53/TP53 leading to its proteasomal degradation; the function is enhanced by MAGEC2 and MAGEA2, and possibly MAGEA3 and MAGEA6. Mediates the nuclear localization of KOX1, ZNF268 and ZNF300 transcription factors. In association with isoform 2 of ZFP90, is required for the transcriptional repressor activity of FOXP3 and the suppressive function of regulatory T-cells (Treg). Probably forms a corepressor complex required for activated KRAS-mediated promoter hypermethylation and transcriptional silencing of tumor suppressor genes (TSGs) or other tumor-related genes in colorectal cancer (CRC) cells. Required to maintain a transcriptionally repressive state of genes in undifferentiated embryonic stem cells (ESCs). In ESCs, in collaboration with SETDB1, is also required for H3K9me3 and silencing of endogenous and introduced retroviruses in a DNA-methylation independent-pathway. Associates at promoter regions of tumor suppressor genes (TSGs) leading to their gene silencing. The SETDB1-TRIM28-ZNF274 complex may play a role in recruiting ATRX to the 3'-exons of zinc finger genes with atypical chromatin signatures to establish or maintain/protect H3K9me3 at these transcriptionally active regions. The chain is Transcription intermediary factor 1-beta from Rattus norvegicus (Rat).